The chain runs to 553 residues: Undecaprenyl phosphate-alpha-4-amino-4-deoxy-L-arabinose arabinosyl transferase (553 aa).

Transmembrane regions (helical) follow at residues 8-28 (LVLL…RALW), 83-103 (VRFG…WLAF), 111-131 (VAVL…VGTY), 132-152 (AVLD…FWLG), 176-196 (VMTK…PWVI), 204-224 (VLLF…PWAL), 255-275 (APFW…VALL), 288-308 (IESG…FFSI), 317-337 (ILPC…QLVA), 350-370 (TVFG…WGIA), 380-400 (VLKV…GYLT), and 407-427 (LWQW…GMIP).

Belongs to the glycosyltransferase 83 family.

It localises to the cell inner membrane. The enzyme catalyses 4-amino-4-deoxy-alpha-L-arabinopyranosyl di-trans,octa-cis-undecaprenyl phosphate + lipid IVA = lipid IIA + di-trans,octa-cis-undecaprenyl phosphate.. It participates in lipopolysaccharide metabolism; 4-amino-4-deoxy-beta-L-arabinose-lipid A biosynthesis. Functionally, catalyzes the transfer of the L-Ara4N moiety of the glycolipid undecaprenyl phosphate-alpha-L-Ara4N to lipid A. The modified arabinose is attached to lipid A and is required for resistance to polymyxin and cationic antimicrobial peptides. The sequence is that of Undecaprenyl phosphate-alpha-4-amino-4-deoxy-L-arabinose arabinosyl transferase from Enterobacter sp. (strain 638).